Here is a 218-residue protein sequence, read N- to C-terminus: Thymidylate kinase (218 aa).

15–22 (GLDRSGKS) is an ATP binding site.

It belongs to the thymidylate kinase family.

The catalysed reaction is dTMP + ATP = dTDP + ADP. It participates in pyrimidine metabolism; dTTP biosynthesis. Catalyzes the conversion of dTMP to dTDP. The polypeptide is Thymidylate kinase (Caenorhabditis elegans).